The chain runs to 371 residues: MTEADPVPLARDLLRSRSVTPEDDGAQTVLARALDALGFSIEWLRFGEVSNLVARRGSGSPHFGFAGHTDVVPPGEGWRHDPFAAVIEDGLLFGRGAVDMKGAIAAFVAALAARPANHAGTISLLITGDEEGDAVDGTRRILDHLAASGALPEFCLVGEPTCRARLGDTIKIGRRGSISAHVTVRGVQGHVAYPHLADNPLHRLIPALEALRATTLDEGTAWFEPSSLQITSVDTGNKAGNVIPASASARLNIRFNDRHTGPDLAAWIRDTVARHAPGAACDIGISGEAFLTEPGPVTTLFSEAVAAVTGITPKLDTGGGTSDARFIAAHCPVAEFGLVGTSMHRVDEAVPVSELRALAEIYGRILDRVFR.

A Zn(2+)-binding site is contributed by H68. Residue D70 is part of the active site. D99 serves as a coordination point for Zn(2+). E130 serves as the catalytic Proton acceptor. Residues E131, E159, and H344 each coordinate Zn(2+).

The protein belongs to the peptidase M20A family. DapE subfamily. In terms of assembly, homodimer. Zn(2+) serves as cofactor. Co(2+) is required as a cofactor.

The enzyme catalyses N-succinyl-(2S,6S)-2,6-diaminopimelate + H2O = (2S,6S)-2,6-diaminopimelate + succinate. It functions in the pathway amino-acid biosynthesis; L-lysine biosynthesis via DAP pathway; LL-2,6-diaminopimelate from (S)-tetrahydrodipicolinate (succinylase route): step 3/3. Its function is as follows. Catalyzes the hydrolysis of N-succinyl-L,L-diaminopimelic acid (SDAP), forming succinate and LL-2,6-diaminopimelate (DAP), an intermediate involved in the bacterial biosynthesis of lysine and meso-diaminopimelic acid, an essential component of bacterial cell walls. This Acidiphilium cryptum (strain JF-5) protein is Succinyl-diaminopimelate desuccinylase.